The primary structure comprises 1165 residues: Sperm-associated antigen 5 (1165 aa).

Residues 1 to 23 are disordered; sequence MWRVKTLNLGLSPSPQKGKPAMS. A phosphoserine mark is found at serine 12, serine 14, serine 66, serine 161, serine 321, serine 333, and serine 342. A disordered region spans residues 431–457; that stretch reads TVPHREARDSSTQTDSSPCGVTKTPKH. The span at 440–449 shows a compositional bias: polar residues; that stretch reads SSTQTDSSPC. The segment at 453–821 is interaction with KNSTRN; it reads KTPKHLQDSK…LRDTVDSLRA (369 aa). Positions 509–856 form a coiled coil; it reads RSKTLVSSCS…LLAEQLQSLT (348 aa). Residues 875–907 are disordered; it reads PSTGSAPAQEHPLSNDSSISEQTPTAAVDEVPE. Polar residues predominate over residues 876–897; it reads STGSAPAQEHPLSNDSSISEQT. Residues 937–1146 are a coiled coil; the sequence is DLEKSLAEMS…IQHVYETLLS (210 aa). Residue serine 946 is modified to Phosphoserine; by GSK3-beta.

As to quaternary structure, homodimer, with a globular head domain and a long stalk. Homooligomer; the globular head domains associate, resulting in aster-like structures. Binds to microtubules in the mitotic spindle. Interacts with DCLRE1B/Apollo. Part of an astrin (SPAG5)-kinastrin (SKAP) complex containing KNSTRN, SPAG5, PLK1, DYNLL1 and SGO2A. Interacts with KNSTRN. Interacts with RPTOR; this interaction competes with RPTOR binding to MTOR, resulting in decreased mTORC1 formation. Interacts with G3BP1. The complex formed with G3BP1 and RPTOR is increased by oxidative stress. Interacts with OSBPL8, PCM1 and CDK5RAP2. Interacts (via C-terminus) with NUMA1 (via C-terminus); this interaction promotes the recruitment of SPAG5 to the microtubules at spindle poles in a dynein-dynactin-dependent manner. Interacts with DYNLL1. Phosphorylated by AURKA. In terms of tissue distribution, detected in testis, but not in the other tissues tested.

The protein localises to the cytoplasm. The protein resides in the cytoskeleton. Its subcellular location is the spindle. It localises to the spindle pole. It is found in the chromosome. The protein localises to the centromere. The protein resides in the kinetochore. Its subcellular location is the midbody. It localises to the microtubule organizing center. It is found in the centrosome. The protein localises to the centriolar satellite. In terms of biological role, essential component of the mitotic spindle required for normal chromosome segregation and progression into anaphase. Required for chromosome alignment, normal timing of sister chromatid segregation, and maintenance of spindle pole architecture. In complex with SKAP, promotes stable microtubule-kinetochore attachments. May contribute to the regulation of separase activity. May regulate AURKA localization to mitotic spindle, but not to centrosomes and CCNB1 localization to both mitotic spindle and centrosomes. Involved in centriole duplication. Required for CDK5RAP22, CEP152, WDR62 and CEP63 centrosomal localization and promotes the centrosomal localization of CDK2. In non-mitotic cells, upon stress induction, inhibits mammalian target of rapamycin complex 1 (mTORC1) association and recruits the mTORC1 component RPTOR to stress granules (SGs), thereby preventing mTORC1 hyperactivation-induced apoptosis. May enhance GSK3B-mediated phosphorylation of other substrates, such as MAPT/TAU. This chain is Sperm-associated antigen 5 (Spag5), found in Mus musculus (Mouse).